The chain runs to 300 residues: Fluorinase (300 aa).

S-adenosyl-L-methionine is bound by residues D16, 21 to 23 (DDS), Y77, S158, D211, N216, 270 to 271 (SR), and 278 to 280 (RNA).

This sequence belongs to the SAM hydrolase / SAM-dependent halogenase family. As to quaternary structure, homohexamer.

The enzyme catalyses fluoride + S-adenosyl-L-methionine = 5'-deoxy-5'-fluoroadenosine + L-methionine. It carries out the reaction chloride + S-adenosyl-L-methionine = 5'-chloro-5'-deoxyadenosine + L-methionine. Activity is severely inhibited by 1 mM Cu(2+) or Zn(2+). In terms of biological role, catalyzes the formation of a C-F bond by combining S-adenosyl-L-methionine (SAM) and fluoride to generate 5'-fluoro-5'-deoxyadenosine (5'-FDA) and L-methionine. Probably involved in fluoroacetate (FAc) and 4-fluorothreonine (4-FT) biosynthesis. In vitro, can also catalyze the conversion of chloride and SAM to 5'-chloro-5'-deoxyadenosine (5'-CIDA) and L-methionine in the presence of L-amino acid oxidase. The protein is Fluorinase of Nocardia brasiliensis (strain ATCC 700358 / HUJEG-1).